Here is a 412-residue protein sequence, read N- to C-terminus: 23S rRNA (uracil(747)-C(5))-methyltransferase (412 aa).

Positions 63, 69, 72, and 139 each coordinate [4Fe-4S] cluster. S-adenosyl-L-methionine-binding residues include Q255, Y281, E302, and D343. The active-site Nucleophile is C369.

It belongs to the class I-like SAM-binding methyltransferase superfamily. RNA M5U methyltransferase family.

It catalyses the reaction uridine(747) in 23S rRNA + S-adenosyl-L-methionine = 5-methyluridine(747) in 23S rRNA + S-adenosyl-L-homocysteine + H(+). Catalyzes the formation of 5-methyl-uridine at position equivalent to 747 (m5U747) in 23S rRNA. The chain is 23S rRNA (uracil(747)-C(5))-methyltransferase from Pyrococcus horikoshii (strain ATCC 700860 / DSM 12428 / JCM 9974 / NBRC 100139 / OT-3).